A 283-amino-acid polypeptide reads, in one-letter code: KNFALAILVVTFVVAVFGNTNLDPPTRPTRLRREAKPEAEPGNNRPVYIPQPRPPHPRLRREAEPEAEPGNNRPVYIPQPRPPHPRLRREAELEAEPGNNRPVYISQPRPPHPRLRREAEPEAEPGNNRPVYIPQPRPPHPRLRREAELEAEPGNNRPVYISQPRPPHPRLRREAEPEAEPGNNRPVYIPQPRPPHPRLRREAEPEAEPGNNRPVYIPQPRPPHPRLRREAEPEAEPGNNRPVYIPQPRPPHPRLRREAKPEAKPGNNRPVYIPQPRPPHPRI.

The N-terminal stretch at 1–18 (KNFALAILVVTFVVAVFG) is a signal peptide. 9 propeptides span residues 19 to 41 (NTNL…EAEP), 62 to 69 (EAEPEAEP), 90 to 97 (EAELEAEP), 118 to 125 (EAEPEAEP), 146 to 153 (EAELEAEP), 174 to 181 (EAEPEAEP), 202 to 209 (EAEPEAEP), 230 to 237 (EAEPEAEP), and 258 to 265 (EAKPEAKP). Residues 19–283 (NTNLDPPTRP…PQPRPPHPRI (265 aa)) form a disordered region. Positions 273-283 (IPQPRPPHPRI) are enriched in pro residues.

The protein belongs to the apidaecin family.

It localises to the secreted. Its function is as follows. Apidaecins have bactericidal activity; predominantly against Gram-negative bacteria. They seem to interfere with cell propagation. The protein is Apidaecins type 73 (APID73) of Apis mellifera (Honeybee).